A 447-amino-acid polypeptide reads, in one-letter code: Phosphoglucosamine mutase (447 aa).

Ser-100 (phosphoserine intermediate) is an active-site residue. Mg(2+) is bound by residues Ser-100, Asp-239, Asp-241, and Asp-243. A Phosphoserine modification is found at Ser-100.

This sequence belongs to the phosphohexose mutase family. Mg(2+) is required as a cofactor. Activated by phosphorylation.

It catalyses the reaction alpha-D-glucosamine 1-phosphate = D-glucosamine 6-phosphate. Catalyzes the conversion of glucosamine-6-phosphate to glucosamine-1-phosphate. The protein is Phosphoglucosamine mutase of Caldanaerobacter subterraneus subsp. tengcongensis (strain DSM 15242 / JCM 11007 / NBRC 100824 / MB4) (Thermoanaerobacter tengcongensis).